A 41-amino-acid polypeptide reads, in one-letter code: Large ribosomal subunit protein bL36 (41 aa).

Belongs to the bacterial ribosomal protein bL36 family.

This Parvibaculum lavamentivorans (strain DS-1 / DSM 13023 / NCIMB 13966) protein is Large ribosomal subunit protein bL36.